A 379-amino-acid chain; its full sequence is F-box protein At1g67340 (379 aa).

The F-box domain occupies 41 to 92 (ADLLDSIPDDLVISILCKLGSTSRCPADFINVLLTCKRLKGLAMNPIVLSRL). Zn(2+) is bound by residues H304, C307, C320, C323, C329, C333, H342, and C346. The MYND-type; atypical zinc finger occupies 304–346 (HAGCGRPETRKHEFRRCSVCGVVNYCSRACQALDWKLRHKMDC). The interval 358 to 379 (GGEGNVQIDGNGNGDNVLLPMS) is disordered.

As to quaternary structure, part of a SCF (ASK-cullin-F-box) protein ligase complex. Interacts with SKP1A/ASK1, SKP1B/ASK2, ASK4, ASK11 and ASK13.

It localises to the nucleus. The protein operates within protein modification; protein ubiquitination. Its function is as follows. Component of SCF(ASK-cullin-F-box) E3 ubiquitin ligase complexes, which may mediate the ubiquitination and subsequent proteasomal degradation of target proteins. The protein is F-box protein At1g67340 of Arabidopsis thaliana (Mouse-ear cress).